The following is a 31-amino-acid chain: Cyclotide mden-J (31 aa).

A cross-link (cyclopeptide (Gly-Asn)) is located at residues 1-31 (GSIPCGESCVYIPCISSIVGCACKSKVCYKN). 3 disulfide bridges follow: Cys-5–Cys-21, Cys-9–Cys-23, and Cys-14–Cys-28.

This sequence belongs to the cyclotide family. Bracelet subfamily. Post-translationally, this is a cyclic peptide.

Its function is as follows. Probably participates in a plant defense mechanism. This is Cyclotide mden-J from Melicytus dentatus (Tree violet).